A 170-amino-acid chain; its full sequence is Probable Brix domain-containing ribosomal biogenesis protein (170 aa).

Positions 6–170 constitute a Brix domain; it reads TRIVITSSRD…IKFLKMILEA (165 aa).

Its function is as follows. Probably involved in the biogenesis of the ribosome. The sequence is that of Probable Brix domain-containing ribosomal biogenesis protein from Saccharolobus solfataricus (strain ATCC 35092 / DSM 1617 / JCM 11322 / P2) (Sulfolobus solfataricus).